The sequence spans 356 residues: Calcium/calmodulin-dependent protein kinase type 1 (356 aa).

Residues proline 2–arginine 7 carry the Nuclear localization signal motif. Residues tyrosine 22–isoleucine 278 enclose the Protein kinase domain. ATP-binding positions include leucine 28–valine 36 and lysine 52. Aspartate 144 (proton acceptor) is an active-site residue. At threonine 179 the chain carries Phosphothreonine; by ckk-1. Residues isoleucine 278–leucine 318 are autoinhibitory domain. The segment at lysine 298–glutamine 319 is calmodulin-binding.

Belongs to the protein kinase superfamily. CAMK Ser/Thr protein kinase family. CaMK subfamily. The cofactor is Mg(2+).

The protein resides in the nucleus. It is found in the cytoplasm. It catalyses the reaction L-seryl-[protein] + ATP = O-phospho-L-seryl-[protein] + ADP + H(+). The catalysed reaction is L-threonyl-[protein] + ATP = O-phospho-L-threonyl-[protein] + ADP + H(+). With respect to regulation, activated by Ca(2+)/calmodulin. Binding of calmodulin results in a conformational change that generates functional binding sites for both substrate and ATP, and thus relieves autoinhibition and lowers the Km of substrate binding. Must be phosphorylated by ckk-1 to be maximally active but this does not appear to be required for activity in AFD neurons. Functionally, calcium/calmodulin-dependent protein kinase that operates in the calcium-triggered CaMKK-CaMK1 signaling cascade which results in transcriptional activation. Transcriptional activation occurs at least in part through phosphorylation of crh-1. Regulates gene expression, sensory morphology, and function of the AFD thermosensory neurons. Involved in long-term adaptation of AFD neurons to temperatures warmer than the initial acclimatized cultivation temperature. Acts in the FLP thermal nociceptors to moderate the responsiveness to noxious heat and controls neuropeptide release from FLP neurons in response to temperature elevations. Regulates the dauer decision, the decision of the larvae to enter into the alternative stress-resistant and long-lived dauer developmental stage, based on the feeding state, primarily in the AWC sensory neurons. Acts non cell-autonomously in the AWC neurons to regulate expression of the daf-28 insulin-like peptide and cell-autonomously in the ASI sensory neurons to regulate expression of the growth promoting daf-7 in a food-regulated manner. Plays a role in memory-based thermal response of an individual AFD neuron cell. Involved in chemotaxis response in AWC neurons to attractant 2-heptanone, a volatile organic compound emitted by the nematode pathogenic bacterium B.nematocida B16. Represses transcription of glutamate receptor glr-1 in the nucleus basally and in response to change in synaptic activity. The sequence is that of Calcium/calmodulin-dependent protein kinase type 1 (cmk-1) from Caenorhabditis briggsae.